Here is a 146-residue protein sequence, read N- to C-terminus: Hemoglobin subunit beta (146 aa).

Val-1 carries the post-translational modification N-acetylvaline. The Globin domain maps to 2–146 (HLTPEEKNAV…VANALAHKYH (145 aa)). Thr-12 bears the Phosphothreonine mark. Phosphoserine is present on Ser-44. Lys-59 carries the N6-acetyllysine modification. Position 63 (His-63) interacts with heme b. Lys-82 bears the N6-acetyllysine mark. His-92 provides a ligand contact to heme b. The residue at position 93 (Cys-93) is an S-nitrosocysteine. At Lys-144 the chain carries N6-acetyllysine.

It belongs to the globin family. Heterotetramer of two alpha chains and two beta chains. As to expression, red blood cells.

Functionally, involved in oxygen transport from the lung to the various peripheral tissues. The sequence is that of Hemoglobin subunit beta (HBB) from Macaca mulatta (Rhesus macaque).